A 272-amino-acid polypeptide reads, in one-letter code: 4-hydroxy-tetrahydrodipicolinate reductase (272 aa).

Residues 12 to 17 (GAAGRM) and Glu38 each bind NAD(+). An NADP(+)-binding site is contributed by Arg39. NAD(+) contacts are provided by residues 102–104 (GTT) and 126–129 (SGNM). Residue His160 is the Proton donor/acceptor of the active site. His161 contributes to the (S)-2,3,4,5-tetrahydrodipicolinate binding site. Catalysis depends on Lys164, which acts as the Proton donor. 170–171 (GT) contributes to the (S)-2,3,4,5-tetrahydrodipicolinate binding site.

This sequence belongs to the DapB family.

The protein localises to the cytoplasm. The enzyme catalyses (S)-2,3,4,5-tetrahydrodipicolinate + NAD(+) + H2O = (2S,4S)-4-hydroxy-2,3,4,5-tetrahydrodipicolinate + NADH + H(+). The catalysed reaction is (S)-2,3,4,5-tetrahydrodipicolinate + NADP(+) + H2O = (2S,4S)-4-hydroxy-2,3,4,5-tetrahydrodipicolinate + NADPH + H(+). Its pathway is amino-acid biosynthesis; L-lysine biosynthesis via DAP pathway; (S)-tetrahydrodipicolinate from L-aspartate: step 4/4. Catalyzes the conversion of 4-hydroxy-tetrahydrodipicolinate (HTPA) to tetrahydrodipicolinate. The protein is 4-hydroxy-tetrahydrodipicolinate reductase of Rhizobium meliloti (strain 1021) (Ensifer meliloti).